Here is a 77-residue protein sequence, read N- to C-terminus: Acyl carrier protein homolog (77 aa).

The Carrier domain occupies 1 to 76; the sequence is MSINIKDLIM…DLINAFEDVL (76 aa). Serine 36 carries the O-(pantetheine 4'-phosphoryl)serine modification.

In terms of processing, 4'-phosphopantetheine is transferred from CoA to a specific serine of the apo-ACP-like protein.

It functions in the pathway lipid metabolism; fatty acid biosynthesis. Functionally, carrier of the growing fatty acid chain in fatty acid biosynthesis. The polypeptide is Acyl carrier protein homolog (Ureaplasma parvum serovar 3 (strain ATCC 700970)).